Consider the following 173-residue polypeptide: Ribulose bisphosphate carboxylase small subunit, chloroplastic 7 (173 aa).

The N-terminal 49 residues, 1 to 49 (MASIPATVATVAQANMVAPFTGLKSNAAFPVTKKVNDFSTLASNGGRVQ), are a transit peptide targeting the chloroplast.

The protein belongs to the RuBisCO small chain family. As to quaternary structure, heterohexadecamer of 8 large and 8 small subunits.

It localises to the plastid. Its subcellular location is the chloroplast. Functionally, ruBisCO catalyzes two reactions: the carboxylation of D-ribulose 1,5-bisphosphate, the primary event in carbon dioxide fixation, as well as the oxidative fragmentation of the pentose substrate. Both reactions occur simultaneously and in competition at the same active site. Although the small subunit is not catalytic it is essential for maximal activity. This chain is Ribulose bisphosphate carboxylase small subunit, chloroplastic 7, found in Flaveria pringlei.